Reading from the N-terminus, the 346-residue chain is c-di-GMP synthase (346 aa).

It belongs to the CD-NTase family.

The enzyme catalyses 2 GTP = 3',3'-c-di-GMP + 2 diphosphate. Functionally, cyclic nucleotide synthase (second messenger synthase) of a CBASS antivirus system. CBASS (cyclic oligonucleotide-based antiphage signaling system) provides immunity against bacteriophage. The CD-NTase protein synthesizes cyclic nucleotides in response to infection; these serve as specific second messenger signals. The signals activate a diverse range of effectors, leading to bacterial cell death and thus abortive phage infection. A type I-D(GG) CBASS system. In terms of biological role, cyclic dinucleotide synthase that catalyzes the synthesis of c-di-GMP, has no activity with other NTP substrates. This Lachnospiraceae bacterium (strain RUG226) protein is c-di-GMP synthase.